The following is a 425-amino-acid chain: Malate transporter MleP (425 aa).

A run of 11 helical transmembrane segments spans residues 11–31 (GISLPLYAFFVAVIIVVTLLG), 35–55 (LDMVGLTLLLVTLGHLLYFIG), 65–85 (LGGGSVFTLIGATLLSFFHIV), 96–116 (FMGGKFGFLDFYIAALICGSI), 134–154 (IALITMVIGFFSVGLVGMLIG), 196–216 (IFSQLAPAVTFGNILAIIGAL), 246–266 (IKLDAQQIGTGMLFAFALLMA), 269–289 (ILNKFFPNIHQYAFMIIIVFI), 310–330 (VIMTNLTHAVLAGIGLALIDL), 339–359 (WQFVVLCLTSVVVMGLASWFL), and 401–421 (FAQMANRLCGAIVLIFGGILI).

It belongs to the 2-hydroxycarboxylate transporter (2-HCT) (TC 2.A.24) family.

The protein localises to the cell membrane. It carries out the reaction (S)-lactate(in) + (S)-malate(out) = (S)-lactate(out) + (S)-malate(in). The catalysed reaction is (R)-lactate(in) + (S)-malate(out) = (R)-lactate(out) + (S)-malate(in). The enzyme catalyses glycolate(in) + (S)-malate(out) = glycolate(out) + (S)-malate(in). Functionally, secondary transporter involved in malolactic fermentation. Catalyzes the uptake of divalent malate into the cell coupled to the exit of monovalent lactate, a product of malate degradation (precursor/product exchange). The malate/lactate exchange is electrogenic and results in the generation of a membrane potential. Is highly selective for the S-enantiomer of malate. In the absence of lactate, MleP can also catalyze the proton-dependent transport of malate. In vitro, transports a range of substrates that contain the 2-hydroxycarboxylate motif, HO-CR(2)-COO(-), with a preference for malate, lactate and glycolate. Modification of the OH or the COO(-) groups of the 2-hydroxycarboxylate motif drastically reduces the affinity of the transporter for the substrates, indicating their relevance in substrate recognition. Significant activity is also observed with some 2-oxocarboxylates. Transports only poorly citromalate. Citrate binds to MleP but is not translocated. The protein is Malate transporter MleP of Lactococcus lactis subsp. lactis (strain IL1403) (Streptococcus lactis).